Consider the following 206-residue polypeptide: Nucleoside triphosphate pyrophosphatase (206 aa).

Residue Asp78 is the Proton acceptor of the active site.

This sequence belongs to the Maf family. The cofactor is a divalent metal cation.

It localises to the cytoplasm. It carries out the reaction a ribonucleoside 5'-triphosphate + H2O = a ribonucleoside 5'-phosphate + diphosphate + H(+). It catalyses the reaction a 2'-deoxyribonucleoside 5'-triphosphate + H2O = a 2'-deoxyribonucleoside 5'-phosphate + diphosphate + H(+). In terms of biological role, nucleoside triphosphate pyrophosphatase. May have a dual role in cell division arrest and in preventing the incorporation of modified nucleotides into cellular nucleic acids. This is Nucleoside triphosphate pyrophosphatase from Prochlorococcus marinus (strain MIT 9312).